Reading from the N-terminus, the 199-residue chain is A-type ATP synthase subunit E (199 aa).

It belongs to the V-ATPase E subunit family. In terms of assembly, has multiple subunits with at least A(3), B(3), C, D, E, F, H, I and proteolipid K(x).

Its subcellular location is the cell membrane. Functionally, component of the A-type ATP synthase that produces ATP from ADP in the presence of a proton gradient across the membrane. The protein is A-type ATP synthase subunit E of Pyrococcus abyssi (strain GE5 / Orsay).